Consider the following 286-residue polypeptide: MKDFKDKVMFITGAAHGFGQVIAEGAADRGMKLTIVDIDEPALKKTYQHILDKGAEVLMVTADVTKEASVDDAVEQAMEKFGRIDLLINNAGIALPGRIWELPTRDWEWIMHINLMSQVYAMKRVIPIMIQQKTHADILNVASIAGLVDTPGMPSYHASKFASVGMTEATAYDLQRANIDIDMHVMCPGFVQTDLYHTENHRPAQYSDPTDPYYQSEAYLKGQQFAKYVITNGKPIDTIADTVFKALEDNRFYILTHPEYNPLIEDRVKRIVTDGAPDVHIMDGIM.

NAD(+)-binding residues include Asp-37, Asp-63, Val-64, Asn-90, Tyr-156, and Lys-160. Tyr-156 serves as the catalytic Proton acceptor.

This sequence belongs to the short-chain dehydrogenases/reductases (SDR) family.

The protein localises to the cytoplasm. It catalyses the reaction (10S)-hydroxy-(12Z)-octadecenoate + NAD(+) = 10-oxo-(12Z)-octadecenoate + NADH + H(+). It carries out the reaction 10-oxo-(11E)-octadecenoate + NADH + H(+) = 10-hydroxy-(11E)-octadecenoate + NAD(+). The enzyme catalyses 10-oxooctadecanoate + NADH + H(+) = 10-hydroxyoctadecanoate + NAD(+). Its pathway is lipid metabolism; fatty acid metabolism. In terms of biological role, is involved in a saturation metabolic pathway of polyunsaturated fatty acids, that detoxifies unsaturated fatty acids and generates hydroxy fatty acids, oxo fatty acids, conjugated fatty acids such as conjugated linoleic acids (CLAs), and partially saturated trans-fatty acids as intermediates. CLA-DH catalyzes the dehydrogenation/reduction steps in the production of 10-oxo-(12Z)-octadecenoate, 10-hydroxy-(11E)-octadecenoate and 10-hydroxyoctadecanoate during linoleate metabolism. As part of the gut microbiome, this enzyme modifies host fatty acid composition and is expected to improve human health by altering lipid metabolism related to the onset of metabolic syndrome. The polypeptide is CLA biosynthesis dehydrogenase/reductase (Lactiplantibacillus plantarum (Lactobacillus plantarum)).